We begin with the raw amino-acid sequence, 225 residues long: uncharacterized protein (225 aa).

Over residues M1 to S19 the composition is skewed to polar residues. Positions M1 to N21 are disordered.

This is an uncharacterized protein from Dictyostelium discoideum (Social amoeba).